A 139-amino-acid chain; its full sequence is Oocyte zinc finger protein XlCOF14 (139 aa).

5 C2H2-type zinc fingers span residues 6-28, 33-55, 61-83, 89-111, and 117-139; these read FICSECGKSFMDKRYLKIHSNVH, FPCTECGKSFAAKQNLKRHQKIH, HKCTECGKQFLQKNKLDRHHLSH, FSCFECGEQFTWKHLLQYHQLSH, and FVCSECGKGYKTKASLALHCHIH.

The protein belongs to the krueppel C2H2-type zinc-finger protein family.

It is found in the nucleus. May be involved in transcriptional regulation. The sequence is that of Oocyte zinc finger protein XlCOF14 from Xenopus laevis (African clawed frog).